A 343-amino-acid chain; its full sequence is Arginine-hydroxylase NDUFAF5, mitochondrial (343 aa).

Residues 1 to 29 (MLRRVVLSRLYARLGGPAVSAGRGGRRGV) constitute a mitochondrion transit peptide. Residues 18 to 40 (AVSAGRGGRRGVASSVPPSGSTS) form a disordered region.

It belongs to the methyltransferase superfamily. In terms of assembly, interacts with NDUFAF8, leading to stabilize NDUFAF5. Interacts with NDUFS7. Interacts with PYURF (via TRM112 domain); the interaction is direct and stabilizes NDUFAF5 protein.

Its subcellular location is the mitochondrion inner membrane. Arginine hydroxylase that mediates hydroxylation of 'Arg-111' of NDUFS7 and is involved in the assembly of mitochondrial NADH:ubiquinone oxidoreductase complex (complex I, MT-ND1) at early stages. May also have methyltransferase activity. This Rattus norvegicus (Rat) protein is Arginine-hydroxylase NDUFAF5, mitochondrial.